A 475-amino-acid chain; its full sequence is Ribulose bisphosphate carboxylase large chain (475 aa).

Residues 1 to 2 constitute a propeptide that is removed on maturation; the sequence is MS. At proline 3 the chain carries N-acetylproline. Lysine 14 bears the N6,N6,N6-trimethyllysine mark. Substrate-binding residues include asparagine 123 and threonine 173. Lysine 175 acts as the Proton acceptor in catalysis. Lysine 177 lines the substrate pocket. Residues lysine 201, aspartate 203, and glutamate 204 each coordinate Mg(2+). Lysine 201 bears the N6-carboxylysine mark. The active-site Proton acceptor is the histidine 294. Arginine 295, histidine 327, and serine 379 together coordinate substrate.

The protein belongs to the RuBisCO large chain family. Type I subfamily. In terms of assembly, heterohexadecamer of 8 large chains and 8 small chains; disulfide-linked. The disulfide link is formed within the large subunit homodimers. The cofactor is Mg(2+). Post-translationally, the disulfide bond which can form in the large chain dimeric partners within the hexadecamer appears to be associated with oxidative stress and protein turnover.

Its subcellular location is the plastid. It localises to the chloroplast. It carries out the reaction 2 (2R)-3-phosphoglycerate + 2 H(+) = D-ribulose 1,5-bisphosphate + CO2 + H2O. The catalysed reaction is D-ribulose 1,5-bisphosphate + O2 = 2-phosphoglycolate + (2R)-3-phosphoglycerate + 2 H(+). Its function is as follows. RuBisCO catalyzes two reactions: the carboxylation of D-ribulose 1,5-bisphosphate, the primary event in carbon dioxide fixation, as well as the oxidative fragmentation of the pentose substrate in the photorespiration process. Both reactions occur simultaneously and in competition at the same active site. In Chlorokybus atmophyticus (Soil alga), this protein is Ribulose bisphosphate carboxylase large chain.